A 550-amino-acid polypeptide reads, in one-letter code: Glucose-6-phosphate isomerase (550 aa).

Residue E356 is the Proton donor of the active site. Catalysis depends on residues H387 and K515.

This sequence belongs to the GPI family.

It is found in the cytoplasm. It carries out the reaction alpha-D-glucose 6-phosphate = beta-D-fructose 6-phosphate. It participates in carbohydrate biosynthesis; gluconeogenesis. Its pathway is carbohydrate degradation; glycolysis; D-glyceraldehyde 3-phosphate and glycerone phosphate from D-glucose: step 2/4. Functionally, catalyzes the reversible isomerization of glucose-6-phosphate to fructose-6-phosphate. The polypeptide is Glucose-6-phosphate isomerase (Syntrophobacter fumaroxidans (strain DSM 10017 / MPOB)).